The following is a 335-amino-acid chain: Ketol-acid reductoisomerase (NADP(+)) (335 aa).

In terms of domain architecture, KARI N-terminal Rossmann spans 1–182 (MATIIYDDET…GATRAGVYET (182 aa)). NADP(+) contacts are provided by residues 25–28 (YGSQ), Arg-48, Ser-51, Ser-53, and 83–86 (DEKQ). Residue His-108 is part of the active site. Residue Gly-134 participates in NADP(+) binding. Positions 183–328 (TFREETETDL…KQIRANIPWL (146 aa)) constitute a KARI C-terminal knotted domain. Mg(2+)-binding residues include Asp-191, Glu-195, Glu-227, and Glu-231. Ser-252 is a binding site for substrate.

Belongs to the ketol-acid reductoisomerase family. Requires Mg(2+) as cofactor.

The catalysed reaction is (2R)-2,3-dihydroxy-3-methylbutanoate + NADP(+) = (2S)-2-acetolactate + NADPH + H(+). The enzyme catalyses (2R,3R)-2,3-dihydroxy-3-methylpentanoate + NADP(+) = (S)-2-ethyl-2-hydroxy-3-oxobutanoate + NADPH + H(+). The protein operates within amino-acid biosynthesis; L-isoleucine biosynthesis; L-isoleucine from 2-oxobutanoate: step 2/4. Its pathway is amino-acid biosynthesis; L-valine biosynthesis; L-valine from pyruvate: step 2/4. Functionally, involved in the biosynthesis of branched-chain amino acids (BCAA). Catalyzes an alkyl-migration followed by a ketol-acid reduction of (S)-2-acetolactate (S2AL) to yield (R)-2,3-dihydroxy-isovalerate. In the isomerase reaction, S2AL is rearranged via a Mg-dependent methyl migration to produce 3-hydroxy-3-methyl-2-ketobutyrate (HMKB). In the reductase reaction, this 2-ketoacid undergoes a metal-dependent reduction by NADPH to yield (R)-2,3-dihydroxy-isovalerate. The sequence is that of Ketol-acid reductoisomerase (NADP(+)) from Methanosarcina mazei (strain ATCC BAA-159 / DSM 3647 / Goe1 / Go1 / JCM 11833 / OCM 88) (Methanosarcina frisia).